The sequence spans 68 residues: Beta-defensin 1 (68 aa).

The first 21 residues, M1–G21, serve as a signal peptide directing secretion. A propeptide spanning residues D22–S32 is cleaved from the precursor. 3 cysteine pairs are disulfide-bonded: C37/C66, C44/C59, and C49/C67.

It belongs to the beta-defensin family. In terms of assembly, monomer. Homodimer.

The protein resides in the secreted. It is found in the membrane. Has bactericidal activity. May act as a ligand for C-C chemokine receptor CCR6. Positively regulates the sperm motility and bactericidal activity in a CCR6-dependent manner. Binds to CCR6 and triggers Ca2+ mobilization in the sperm which is important for its motility. This is Beta-defensin 1 (DEFB1) from Saguinus oedipus (Cotton-top tamarin).